Consider the following 57-residue polypeptide: Large ribosomal subunit protein bL32 (57 aa).

The tract at residues 1-23 (MAVPKKKTSKSKRDKRRATWRHK) is disordered.

The protein belongs to the bacterial ribosomal protein bL32 family.

The protein is Large ribosomal subunit protein bL32 of Nostoc sp. (strain PCC 7120 / SAG 25.82 / UTEX 2576).